A 559-amino-acid polypeptide reads, in one-letter code: Dihydroxy-acid dehydratase (559 aa).

Asp-80 is a binding site for Mg(2+). Cys-121 contributes to the [2Fe-2S] cluster binding site. Mg(2+) is bound by residues Asp-122 and Lys-123. Lys-123 is modified (N6-carboxylysine). Residue Cys-194 participates in [2Fe-2S] cluster binding. A Mg(2+)-binding site is contributed by Glu-447. Catalysis depends on Ser-473, which acts as the Proton acceptor.

It belongs to the IlvD/Edd family. Homodimer. [2Fe-2S] cluster is required as a cofactor. It depends on Mg(2+) as a cofactor.

It catalyses the reaction (2R)-2,3-dihydroxy-3-methylbutanoate = 3-methyl-2-oxobutanoate + H2O. The catalysed reaction is (2R,3R)-2,3-dihydroxy-3-methylpentanoate = (S)-3-methyl-2-oxopentanoate + H2O. Its pathway is amino-acid biosynthesis; L-isoleucine biosynthesis; L-isoleucine from 2-oxobutanoate: step 3/4. It participates in amino-acid biosynthesis; L-valine biosynthesis; L-valine from pyruvate: step 3/4. Functionally, functions in the biosynthesis of branched-chain amino acids. Catalyzes the dehydration of (2R,3R)-2,3-dihydroxy-3-methylpentanoate (2,3-dihydroxy-3-methylvalerate) into 2-oxo-3-methylpentanoate (2-oxo-3-methylvalerate) and of (2R)-2,3-dihydroxy-3-methylbutanoate (2,3-dihydroxyisovalerate) into 2-oxo-3-methylbutanoate (2-oxoisovalerate), the penultimate precursor to L-isoleucine and L-valine, respectively. The polypeptide is Dihydroxy-acid dehydratase (Chlorobium chlorochromatii (strain CaD3)).